The following is a 161-amino-acid chain: NAD(P)H-quinone oxidoreductase subunit I, chloroplastic (161 aa).

4Fe-4S ferredoxin-type domains lie at 55-84 and 95-124; these read GRIH…VDWK and LNYS…MTEE. [4Fe-4S] cluster-binding residues include cysteine 64, cysteine 67, cysteine 70, cysteine 74, cysteine 104, cysteine 107, cysteine 110, and cysteine 114.

Belongs to the complex I 23 kDa subunit family. In terms of assembly, NDH is composed of at least 16 different subunits, 5 of which are encoded in the nucleus. It depends on [4Fe-4S] cluster as a cofactor.

Its subcellular location is the plastid. The protein resides in the chloroplast thylakoid membrane. The catalysed reaction is a plastoquinone + NADH + (n+1) H(+)(in) = a plastoquinol + NAD(+) + n H(+)(out). It catalyses the reaction a plastoquinone + NADPH + (n+1) H(+)(in) = a plastoquinol + NADP(+) + n H(+)(out). Functionally, NDH shuttles electrons from NAD(P)H:plastoquinone, via FMN and iron-sulfur (Fe-S) centers, to quinones in the photosynthetic chain and possibly in a chloroplast respiratory chain. The immediate electron acceptor for the enzyme in this species is believed to be plastoquinone. Couples the redox reaction to proton translocation, and thus conserves the redox energy in a proton gradient. The chain is NAD(P)H-quinone oxidoreductase subunit I, chloroplastic from Phaseolus vulgaris (Kidney bean).